The following is an 862-amino-acid chain: Phosphatidic acid phosphohydrolase 1 (862 aa).

Residues 19–104 (NPATLSGAID…VPDELLVSPV (86 aa)) form an N-LIP region. 2 disordered regions span residues 104-183 (VMSA…SVEE) and 300-341 (GSTL…AGSG). Positions 105 to 117 (MSATSSPPQSPET) are enriched in polar residues. Serine 110 and serine 114 each carry phosphoserine. Over residues 132-143 (NENKKKEKKVLE) the composition is skewed to basic and acidic residues. 2 stretches are compositionally biased toward low complexity: residues 161-179 (SETT…TPPD) and 300-313 (GSTL…PSGS). A Phosphoserine modification is found at serine 168. The DXDXT motif signature appears at 398 to 402 (DIDGT). N6-acetyllysine is present on lysine 496. Serine 511 bears the Phosphoserine mark. Residue serine 602 is modified to Phosphoserine; by CDC28. The tract at residues 648–732 (SDISNDDSDN…TPNKSTMSKG (85 aa)) is disordered. The span at 651–663 (SNDDSDNIDEDTD) shows a compositional bias: acidic residues. Polar residues-rich tracts occupy residues 664–679 (VSQQ…NSVK) and 687–699 (PQRN…NNNE). Residues 710–730 (ASDLVSSHSSSGSTPNKSTMS) show a composition bias toward low complexity. Threonine 723 carries the post-translational modification Phosphothreonine; by CDC28. At serine 744 the chain carries Phosphoserine; by CDC28. Phosphoserine is present on residues serine 748, serine 773, and serine 774. Positions 757–780 (MDDEDSNYNRTKSRRASSAAATSI) are disordered. N6-acetyllysine is present on lysine 801. The disordered stretch occupies residues 807 to 862 (DVHSLGNSDTESRREQSVNETGRNQLPHNSMDDKDLDSRVSDEFDDDEFDEDEFED). Residues serine 810 and serine 814 each carry the phosphoserine modification. Residue threonine 816 is modified to Phosphothreonine. The span at 824–834 (VNETGRNQLPH) shows a compositional bias: polar residues. A compositionally biased stretch (basic and acidic residues) spans 836 to 848 (SMDDKDLDSRVSD). Residues serine 844 and serine 847 each carry the phosphoserine modification. A compositionally biased stretch (acidic residues) spans 849–862 (EFDDDEFDEDEFED).

This sequence belongs to the lipin family. Mg(2+) serves as cofactor. In terms of processing, acetylation at Lys-496 and Lys-801 by ESA1 promotes synthesis of diacylglycerol. Post-translationally, phosphorylated by CDC28 at the onset of mitosis, and dephosphorylated by the NEM1-SPO7 complex. Phosphorylation regulates recruitment on promoters of lipid biosynthetic enzymes.

It localises to the cytoplasm. Its subcellular location is the nucleus membrane. The protein resides in the endoplasmic reticulum membrane. It catalyses the reaction a 1,2-diacyl-sn-glycero-3-phosphate + H2O = a 1,2-diacyl-sn-glycerol + phosphate. Its activity is regulated as follows. Phenylglyoxal and propranolol inhibit activity in dose-dependent manners with IC(50) values of 1.3 mM and 0.2 mM, respectively. Sertraline inhibits activity in a dose-dependent manner with an IC(50) value of 85 uM; the inhibitory effects of sertraline and propranolol are additive. Functionally, mg(2+)-dependent phosphatidate (PA) phosphatase which catalyzes the dephosphorylation of PA to yield diacylglycerol. Required for de novo lipid synthesis and formation of lipid droplets. Controls transcription of phospholipid biosynthetic genes and nuclear structure by regulating the amount of membrane present at the nuclear envelope. Involved in plasmid maintenance, in respiration and in cell proliferation. This chain is Phosphatidic acid phosphohydrolase 1 (PAH1), found in Saccharomyces cerevisiae (strain ATCC 204508 / S288c) (Baker's yeast).